The sequence spans 857 residues: Aminopeptidase N (857 aa).

Residues E130 and 264 to 268 (GAMEN) contribute to the substrate site. A Zn(2+)-binding site is contributed by H298. The active-site Proton acceptor is the E299. H302 and E321 together coordinate Zn(2+).

It belongs to the peptidase M1 family. In terms of assembly, monomer. It depends on Zn(2+) as a cofactor. Post-translationally, the N-terminus is blocked.

It is found in the cytoplasm. It carries out the reaction Release of an N-terminal amino acid, Xaa-|-Yaa- from a peptide, amide or arylamide. Xaa is preferably Ala, but may be most amino acids including Pro (slow action). When a terminal hydrophobic residue is followed by a prolyl residue, the two may be released as an intact Xaa-Pro dipeptide.. Its function is as follows. Aminopeptidase with broad substrate specificity to several peptides. Shows strong preference for leucine but also cleaves next to Arg and Lys in peptide-bond-containing substrates. This is Aminopeptidase N (pepN) from Streptomyces lividans.